The following is a 370-amino-acid chain: Dual-specificity RNA methyltransferase RlmN (370 aa).

The Proton acceptor role is filled by Glu93. The region spanning 99–331 (DRKRGTLCVS…TRVRRTRGDD (233 aa)) is the Radical SAM core domain. Cys106 and Cys336 are joined by a disulfide. Residues Cys113, Cys117, and Cys120 each contribute to the [4Fe-4S] cluster site. S-adenosyl-L-methionine-binding positions include 162–163 (GE), Ser194, 216–218 (SLH), and Asn293. The active-site S-methylcysteine intermediate is Cys336.

It belongs to the radical SAM superfamily. RlmN family. Requires [4Fe-4S] cluster as cofactor.

Its subcellular location is the cytoplasm. The catalysed reaction is adenosine(2503) in 23S rRNA + 2 reduced [2Fe-2S]-[ferredoxin] + 2 S-adenosyl-L-methionine = 2-methyladenosine(2503) in 23S rRNA + 5'-deoxyadenosine + L-methionine + 2 oxidized [2Fe-2S]-[ferredoxin] + S-adenosyl-L-homocysteine. It catalyses the reaction adenosine(37) in tRNA + 2 reduced [2Fe-2S]-[ferredoxin] + 2 S-adenosyl-L-methionine = 2-methyladenosine(37) in tRNA + 5'-deoxyadenosine + L-methionine + 2 oxidized [2Fe-2S]-[ferredoxin] + S-adenosyl-L-homocysteine. Its function is as follows. Specifically methylates position 2 of adenine 2503 in 23S rRNA and position 2 of adenine 37 in tRNAs. m2A2503 modification seems to play a crucial role in the proofreading step occurring at the peptidyl transferase center and thus would serve to optimize ribosomal fidelity. In Coxiella burnetii (strain RSA 493 / Nine Mile phase I), this protein is Dual-specificity RNA methyltransferase RlmN.